A 59-amino-acid polypeptide reads, in one-letter code: Small ribosomal subunit protein bS21 (59 aa).

This sequence belongs to the bacterial ribosomal protein bS21 family.

In Acholeplasma laidlawii (strain PG-8A), this protein is Small ribosomal subunit protein bS21.